We begin with the raw amino-acid sequence, 338 residues long: Biotin synthase (338 aa).

One can recognise a Radical SAM core domain in the interval 46–270; the sequence is NEVQLSTLLS…VAVARITMPA (225 aa). [4Fe-4S] cluster contacts are provided by Cys61, Cys65, and Cys68. Positions 105, 136, 196, and 274 each coordinate [2Fe-2S] cluster.

Belongs to the radical SAM superfamily. Biotin synthase family. As to quaternary structure, homodimer. [4Fe-4S] cluster serves as cofactor. Requires [2Fe-2S] cluster as cofactor.

The catalysed reaction is (4R,5S)-dethiobiotin + (sulfur carrier)-SH + 2 reduced [2Fe-2S]-[ferredoxin] + 2 S-adenosyl-L-methionine = (sulfur carrier)-H + biotin + 2 5'-deoxyadenosine + 2 L-methionine + 2 oxidized [2Fe-2S]-[ferredoxin]. Its pathway is cofactor biosynthesis; biotin biosynthesis; biotin from 7,8-diaminononanoate: step 2/2. Functionally, catalyzes the conversion of dethiobiotin (DTB) to biotin by the insertion of a sulfur atom into dethiobiotin via a radical-based mechanism. The chain is Biotin synthase from Rhizorhabdus wittichii (strain DSM 6014 / CCUG 31198 / JCM 15750 / NBRC 105917 / EY 4224 / RW1) (Sphingomonas wittichii).